The primary structure comprises 260 residues: Indole-3-glycerol phosphate synthase (260 aa).

This sequence belongs to the TrpC family.

It carries out the reaction 1-(2-carboxyphenylamino)-1-deoxy-D-ribulose 5-phosphate + H(+) = (1S,2R)-1-C-(indol-3-yl)glycerol 3-phosphate + CO2 + H2O. It functions in the pathway amino-acid biosynthesis; L-tryptophan biosynthesis; L-tryptophan from chorismate: step 4/5. In Neisseria gonorrhoeae (strain ATCC 700825 / FA 1090), this protein is Indole-3-glycerol phosphate synthase.